A 32-amino-acid polypeptide reads, in one-letter code: Cytochrome b6-f complex subunit 7 (32 aa).

A helical membrane pass occupies residues Ala-9–Val-29.

Belongs to the PetM family. As to quaternary structure, the 4 large subunits of the cytochrome b6-f complex are cytochrome b6, subunit IV (17 kDa polypeptide, PetD), cytochrome f and the Rieske protein, while the 4 small subunits are PetG, PetL, PetM and PetN. The complex functions as a dimer.

Its subcellular location is the plastid. The protein resides in the chloroplast thylakoid membrane. Its function is as follows. Component of the cytochrome b6-f complex, which mediates electron transfer between photosystem II (PSII) and photosystem I (PSI), cyclic electron flow around PSI, and state transitions. In Porphyra purpurea (Red seaweed), this protein is Cytochrome b6-f complex subunit 7.